We begin with the raw amino-acid sequence, 962 residues long: Protein suppressor of underreplication (962 aa).

Disordered regions lie at residues 353-413, 438-590, 658-712, 866-900, and 916-962; these read EIVT…TRAA, TPTP…LSGS, NSSH…SPDL, QERTQPSNGNRNSIVASLRKSPKSPKHGARTTQAT, and QTSS…ELFK. Over residues 372–382 the composition is skewed to basic residues; sequence PRTKSKKKCSK. The span at 386–395 shows a compositional bias: basic and acidic residues; the sequence is PCKEADLTDS. 2 stretches are compositionally biased toward polar residues: residues 438-448 and 480-489; these read TPTPSGATTAI and LTRSAESKIN. Residues 524–552 show a composition bias toward basic and acidic residues; it reads VKQESKAKAKPEQKKKIKTVDKPAQETPK. Residues 553 to 562 are compositionally biased toward basic residues; sequence RKPGRPRKCK. Over residues 564–576 the composition is skewed to polar residues; it reads LTETLGKSKTKPN. A compositionally biased stretch (basic residues) spans 673–683; sequence RRTKALKRKRK. 2 stretches are compositionally biased toward polar residues: residues 703–712 and 866–880; these read RSATNKSPDL and QERTQPSNGNRNSIV. A compositionally biased stretch (basic residues) spans 885–894; it reads KSPKSPKHGA. Over residues 916–944 the composition is skewed to polar residues; it reads QTSSVESVSAPSTPVNPSTSAAACQTRTA. Positions 953–962 are enriched in basic residues; sequence TKRKRLELFK.

The protein resides in the nucleus. It is found in the chromosome. Functionally, required for underreplication of DNA, which is found in many late replicating euchromatic regions of salivary gland polytene chromosomes. Controls chromatin organization in polytene chromosomes. This chain is Protein suppressor of underreplication (SuUR), found in Drosophila erecta (Fruit fly).